Reading from the N-terminus, the 435-residue chain is Histidinol dehydrogenase (435 aa).

Residues Tyr131, Gln189, and Asn212 each coordinate NAD(+). The substrate site is built by Ser238, Gln260, and His263. 2 residues coordinate Zn(2+): Gln260 and His263. Catalysis depends on proton acceptor residues Glu327 and His328. Residues His328, Asp361, Glu415, and His420 each contribute to the substrate site. Asp361 contributes to the Zn(2+) binding site. His420 contributes to the Zn(2+) binding site.

This sequence belongs to the histidinol dehydrogenase family. In terms of assembly, homodimer. Zn(2+) is required as a cofactor.

The catalysed reaction is L-histidinol + 2 NAD(+) + H2O = L-histidine + 2 NADH + 3 H(+). It participates in amino-acid biosynthesis; L-histidine biosynthesis; L-histidine from 5-phospho-alpha-D-ribose 1-diphosphate: step 9/9. Catalyzes the sequential NAD-dependent oxidations of L-histidinol to L-histidinaldehyde and then to L-histidine. This Buchnera aphidicola subsp. Baizongia pistaciae (strain Bp) protein is Histidinol dehydrogenase.